The primary structure comprises 287 residues: Phosphatidylserine decarboxylase proenzyme (287 aa).

Residues Asp90, His147, and Ser253 each act as charge relay system; for autoendoproteolytic cleavage activity in the active site. Catalysis depends on Ser253, which acts as the Schiff-base intermediate with substrate; via pyruvic acid; for decarboxylase activity. Residue Ser253 is modified to Pyruvic acid (Ser); by autocatalysis.

The protein belongs to the phosphatidylserine decarboxylase family. PSD-B subfamily. Prokaryotic type I sub-subfamily. In terms of assembly, heterodimer of a large membrane-associated beta subunit and a small pyruvoyl-containing alpha subunit. Requires pyruvate as cofactor. Is synthesized initially as an inactive proenzyme. Formation of the active enzyme involves a self-maturation process in which the active site pyruvoyl group is generated from an internal serine residue via an autocatalytic post-translational modification. Two non-identical subunits are generated from the proenzyme in this reaction, and the pyruvate is formed at the N-terminus of the alpha chain, which is derived from the carboxyl end of the proenzyme. The autoendoproteolytic cleavage occurs by a canonical serine protease mechanism, in which the side chain hydroxyl group of the serine supplies its oxygen atom to form the C-terminus of the beta chain, while the remainder of the serine residue undergoes an oxidative deamination to produce ammonia and the pyruvoyl prosthetic group on the alpha chain. During this reaction, the Ser that is part of the protease active site of the proenzyme becomes the pyruvoyl prosthetic group, which constitutes an essential element of the active site of the mature decarboxylase.

The protein resides in the cell membrane. The enzyme catalyses a 1,2-diacyl-sn-glycero-3-phospho-L-serine + H(+) = a 1,2-diacyl-sn-glycero-3-phosphoethanolamine + CO2. Its pathway is phospholipid metabolism; phosphatidylethanolamine biosynthesis; phosphatidylethanolamine from CDP-diacylglycerol: step 2/2. Catalyzes the formation of phosphatidylethanolamine (PtdEtn) from phosphatidylserine (PtdSer). This is Phosphatidylserine decarboxylase proenzyme from Aliivibrio fischeri (strain ATCC 700601 / ES114) (Vibrio fischeri).